The primary structure comprises 175 residues: B9 domain-containing protein 2 (175 aa).

Positions 2–118 constitute a C2 B9-type domain; that stretch reads AEVHVIGQII…DCPTWRPLGS (117 aa).

It belongs to the B9D family. As to quaternary structure, part of the tectonic-like complex (also named B9 complex). Interacts with TUBG1. Highest expression in thymus and skeletal muscle. Also expressed in spleen, kidney, lung, heart, microglia and liver. Detected in brain (at protein level).

It is found in the cytoplasm. Its subcellular location is the cytoskeleton. The protein localises to the cilium basal body. The protein resides in the cilium axoneme. It localises to the nucleus. Its function is as follows. Component of the tectonic-like complex, a complex localized at the transition zone of primary cilia and acting as a barrier that prevents diffusion of transmembrane proteins between the cilia and plasma membranes. This Mus musculus (Mouse) protein is B9 domain-containing protein 2 (B9d2).